An 869-amino-acid polypeptide reads, in one-letter code: Bifunctional uridylyltransferase/uridylyl-removing enzyme (869 aa).

The segment at 1-331 (MPTNLPALPM…FPSESQVTRV (331 aa)) is uridylyltransferase. Residues 332-688 (INERFVERQG…ARISPAGEGL (357 aa)) are uridylyl-removing. The HD domain occupies 450–572 (VDQHILMVVR…VGDERHLTAL (123 aa)). ACT domains lie at 689–773 (QVAV…PSQG) and 800–869 (LLSL…ALEI).

This sequence belongs to the GlnD family. The cofactor is Mg(2+).

The enzyme catalyses [protein-PII]-L-tyrosine + UTP = [protein-PII]-uridylyl-L-tyrosine + diphosphate. The catalysed reaction is [protein-PII]-uridylyl-L-tyrosine + H2O = [protein-PII]-L-tyrosine + UMP + H(+). With respect to regulation, uridylyltransferase (UTase) activity is inhibited by glutamine, while glutamine activates uridylyl-removing (UR) activity. Its function is as follows. Modifies, by uridylylation and deuridylylation, the PII regulatory proteins (GlnB and homologs), in response to the nitrogen status of the cell that GlnD senses through the glutamine level. Under low glutamine levels, catalyzes the conversion of the PII proteins and UTP to PII-UMP and PPi, while under higher glutamine levels, GlnD hydrolyzes PII-UMP to PII and UMP (deuridylylation). Thus, controls uridylylation state and activity of the PII proteins, and plays an important role in the regulation of nitrogen assimilation and metabolism. This Cupriavidus pinatubonensis (strain JMP 134 / LMG 1197) (Cupriavidus necator (strain JMP 134)) protein is Bifunctional uridylyltransferase/uridylyl-removing enzyme.